Consider the following 543-residue polypeptide: ADP,ATP carrier protein 3 (543 aa).

10 helical membrane-spanning segments follow: residues 46-66 (VLYL…MGNL), 86-106 (IFLP…LSLF), 111-131 (MFDI…LVVW), 175-195 (FLFL…FNIF), 209-229 (ISVY…LTLV), 243-263 (ELGF…ILAL), 306-326 (LLIA…LVEA), 346-366 (FANF…LVVI), 382-402 (LASL…LIAF), and 504-524 (SVSG…LKYL).

It belongs to the ADP/ATP translocase tlc family.

The protein resides in the mitosome membrane. Functionally, ATP transporter involved in the uptake of ATP from the parasite cell cytoplasm into the mitosome matrix. Equilibrates nucleotide pools across a concentration gradient between both sides of the mitosome membrane. This Encephalitozoon cuniculi (strain GB-M1) (Microsporidian parasite) protein is ADP,ATP carrier protein 3 (NTT3).